The chain runs to 548 residues: Probable malate:quinone oxidoreductase (548 aa).

The segment at Lys-522–Leu-548 is disordered. Over residues Ala-539 to Leu-548 the composition is skewed to basic and acidic residues.

This sequence belongs to the MQO family. The cofactor is FAD.

The catalysed reaction is (S)-malate + a quinone = a quinol + oxaloacetate. It functions in the pathway carbohydrate metabolism; tricarboxylic acid cycle; oxaloacetate from (S)-malate (quinone route): step 1/1. This is Probable malate:quinone oxidoreductase from Escherichia fergusonii (strain ATCC 35469 / DSM 13698 / CCUG 18766 / IAM 14443 / JCM 21226 / LMG 7866 / NBRC 102419 / NCTC 12128 / CDC 0568-73).